The sequence spans 276 residues: Mitochondrial outer membrane protein porin 6 (276 aa).

It belongs to the eukaryotic mitochondrial porin (TC 1.B.8.1) family.

It is found in the mitochondrion outer membrane. Forms a channel through the mitochondrial outer membrane that allows diffusion of small hydrophilic molecules. The channel adopts an open conformation at low or zero membrane potential and a closed conformation at potentials above 30-40 mV. The open state has a weak anion selectivity whereas the closed state is cation-selective. This Oryza sativa subsp. japonica (Rice) protein is Mitochondrial outer membrane protein porin 6 (VDAC6).